A 121-amino-acid polypeptide reads, in one-letter code: Small ribosomal subunit protein uS13 (121 aa).

The segment at 94–121 is disordered; that stretch reads GLPLRGQRTRTNARTRKGPRRAAQSLKK.

Belongs to the universal ribosomal protein uS13 family. Part of the 30S ribosomal subunit. Forms a loose heterodimer with protein S19. Forms two bridges to the 50S subunit in the 70S ribosome.

Functionally, located at the top of the head of the 30S subunit, it contacts several helices of the 16S rRNA. In the 70S ribosome it contacts the 23S rRNA (bridge B1a) and protein L5 of the 50S subunit (bridge B1b), connecting the 2 subunits; these bridges are implicated in subunit movement. Contacts the tRNAs in the A and P-sites. The chain is Small ribosomal subunit protein uS13 from Paraburkholderia phymatum (strain DSM 17167 / CIP 108236 / LMG 21445 / STM815) (Burkholderia phymatum).